We begin with the raw amino-acid sequence, 172 residues long: MLKKFFLPDEFVKNIFHITPEKLKERNVKGIITDLDNTLVEWDRPNATPRLIEWFEEMKEHGIKVTIVSNNNERRVKLFSEPLGIPFIYKARKPMGKAFNRAVRNMELKKEDCVVIGDQLLTDVLGGNRNGYHTILVVPVASSDGFITRFNRQVERRILSALKRKGHIQWEE.

Has low dephosphorylation activity on GMP and glucose-6-phosphate. This chain is Probable phosphatase YqeG (yqeG), found in Bacillus subtilis (strain 168).